The sequence spans 283 residues: PTS system mannose-specific EIID component (283 aa).

N-formylmethionine is present on methionine 1. At 1 to 14 (MVDTTQTTTEKKLT) the chain is on the cytoplasmic side. The 271-residue stretch at 11-281 (KKLTQSDIRG…GIAGYACGLL (271 aa)) folds into the PTS EIID domain. The stretch at 15 to 52 (QSDIRGVFLRSNLFQGSWNFERMQALGFCFSMVPAIRR) is an intramembrane region. Topologically, residues 53 to 59 (LYPENNE) are cytoplasmic. The stretch at 60-92 (ARKQAIRRHLEFFNTQPFVAAPILGVTLALEEQ) is an intramembrane region. At 93 to 100 (RANGAEID) the chain is on the cytoplasmic side. Residues 101–140 (DGAINGIKVGLMGPLAGVGDPIFWGTVRPVFAALGAGIAM) are membrane-embedded. The Periplasmic segment spans residues 141–144 (SGSL). Over 145–173 (LGPLLFFILFNLVRLATRYYGVAYGYSKG) the chain traverses the membrane. Topologically, residues 174 to 183 (IDIVKDMGGG) are cytoplasmic. A transmembrane span lies at residues 184–209 (FLQKLTEGASILGLFVMGALVNKWTH). Over 210–241 (VNIPLVVSRITDQTGKEHVTTVQTILDQLMPG) the chain is Periplasmic. A membrane pass occupies residues 242 to 255 (LVPLLLTFACMWLL). Residues 256-261 (RKKVNP) lie on the Cytoplasmic side of the membrane. Positions 262–280 (LWIIVGFFVIGIAGYACGL) form a transmembrane segment. Over 281-283 (LGL) the chain is Periplasmic.

In terms of assembly, homotrimer of protomers that are composed of two subunits, IIC and IID.

Its subcellular location is the cell inner membrane. In terms of biological role, the phosphoenolpyruvate-dependent sugar phosphotransferase system (sugar PTS), a major carbohydrate active transport system, catalyzes the phosphorylation of incoming sugar substrates concomitantly with their translocation across the cell membrane. The enzyme II ManXYZ PTS system is involved in mannose transport. The protein is PTS system mannose-specific EIID component (manZ) of Escherichia coli O157:H7.